The following is a 471-amino-acid chain: tRNA modification GTPase MnmE (471 aa).

The (6S)-5-formyl-5,6,7,8-tetrahydrofolate site is built by R26, E83, and K136. The 162-residue stretch at 232 to 393 (GLRVVLAGQP…LRRRLLQLAG (162 aa)) folds into the TrmE-type G domain. N242 serves as a coordination point for K(+). GTP contacts are provided by residues 242-247 (NVGKSS), 261-267 (TPIAGTT), 286-289 (DTAG), 354-357 (NKAD), and 374-376 (SAR). S246 is a binding site for Mg(2+). K(+) contacts are provided by T261, I263, and T266. T267 serves as a coordination point for Mg(2+). K471 contributes to the (6S)-5-formyl-5,6,7,8-tetrahydrofolate binding site.

Belongs to the TRAFAC class TrmE-Era-EngA-EngB-Septin-like GTPase superfamily. TrmE GTPase family. In terms of assembly, homodimer. Heterotetramer of two MnmE and two MnmG subunits. It depends on K(+) as a cofactor.

The protein localises to the cytoplasm. In terms of biological role, exhibits a very high intrinsic GTPase hydrolysis rate. Involved in the addition of a carboxymethylaminomethyl (cmnm) group at the wobble position (U34) of certain tRNAs, forming tRNA-cmnm(5)s(2)U34. The polypeptide is tRNA modification GTPase MnmE (Methylibium petroleiphilum (strain ATCC BAA-1232 / LMG 22953 / PM1)).